A 348-amino-acid polypeptide reads, in one-letter code: Histidinol-phosphate aminotransferase (348 aa).

Position 211 is an N6-(pyridoxal phosphate)lysine (lysine 211).

The protein belongs to the class-II pyridoxal-phosphate-dependent aminotransferase family. Histidinol-phosphate aminotransferase subfamily. As to quaternary structure, homodimer. It depends on pyridoxal 5'-phosphate as a cofactor.

It carries out the reaction L-histidinol phosphate + 2-oxoglutarate = 3-(imidazol-4-yl)-2-oxopropyl phosphate + L-glutamate. The protein operates within amino-acid biosynthesis; L-histidine biosynthesis; L-histidine from 5-phospho-alpha-D-ribose 1-diphosphate: step 7/9. The polypeptide is Histidinol-phosphate aminotransferase (Pseudomonas entomophila (strain L48)).